Consider the following 342-residue polypeptide: Holliday junction branch migration complex subunit RuvB (342 aa).

Positions 1–185 are large ATPase domain (RuvB-L); that stretch reads MRKDYLNSNK…FGINTRLAYY (185 aa). Residues Leu24, Arg25, Gly66, Lys69, Thr70, Thr71, 132 to 134, Arg175, Tyr185, and Arg222 contribute to the ATP site; that span reads EDF. Thr70 is a Mg(2+) binding site. The interval 186-256 is small ATPAse domain (RuvB-S); that stretch reads DVTLLTQIVK…IAQMALKALD (71 aa). The interval 259–342 is head domain (RuvB-H); it reads EDGLDEMDNR…PPQRAGTLFE (84 aa). 2 residues coordinate DNA: Arg314 and Arg319.

The protein belongs to the RuvB family. In terms of assembly, homohexamer. Forms an RuvA(8)-RuvB(12)-Holliday junction (HJ) complex. HJ DNA is sandwiched between 2 RuvA tetramers; dsDNA enters through RuvA and exits via RuvB. An RuvB hexamer assembles on each DNA strand where it exits the tetramer. Each RuvB hexamer is contacted by two RuvA subunits (via domain III) on 2 adjacent RuvB subunits; this complex drives branch migration. In the full resolvosome a probable DNA-RuvA(4)-RuvB(12)-RuvC(2) complex forms which resolves the HJ.

The protein resides in the cytoplasm. It catalyses the reaction ATP + H2O = ADP + phosphate + H(+). In terms of biological role, the RuvA-RuvB-RuvC complex processes Holliday junction (HJ) DNA during genetic recombination and DNA repair, while the RuvA-RuvB complex plays an important role in the rescue of blocked DNA replication forks via replication fork reversal (RFR). RuvA specifically binds to HJ cruciform DNA, conferring on it an open structure. The RuvB hexamer acts as an ATP-dependent pump, pulling dsDNA into and through the RuvAB complex. RuvB forms 2 homohexamers on either side of HJ DNA bound by 1 or 2 RuvA tetramers; 4 subunits per hexamer contact DNA at a time. Coordinated motions by a converter formed by DNA-disengaged RuvB subunits stimulates ATP hydrolysis and nucleotide exchange. Immobilization of the converter enables RuvB to convert the ATP-contained energy into a lever motion, pulling 2 nucleotides of DNA out of the RuvA tetramer per ATP hydrolyzed, thus driving DNA branch migration. The RuvB motors rotate together with the DNA substrate, which together with the progressing nucleotide cycle form the mechanistic basis for DNA recombination by continuous HJ branch migration. Branch migration allows RuvC to scan DNA until it finds its consensus sequence, where it cleaves and resolves cruciform DNA. The sequence is that of Holliday junction branch migration complex subunit RuvB from Amoebophilus asiaticus (strain 5a2).